Reading from the N-terminus, the 112-residue chain is MKSKVSPSFHFFIFFFLFCLLRTLDYNTYNTNHNDTYMHIKLFFSYYFRFVHLFFFLYYAHLRTTKHYHTLLIQYYPFEMHWSKDLAQRPSSLRLRYFPAYLKRCCYHPMQN.

The next 2 helical transmembrane spans lie at 7-26 (PSFH…TLDY) and 36-58 (TYMH…FFLY).

It is found in the membrane. This is an uncharacterized protein from Saccharomyces cerevisiae (strain ATCC 204508 / S288c) (Baker's yeast).